Here is a 260-residue protein sequence, read N- to C-terminus: 2-amino-3,7-dideoxy-D-threo-hept-6-ulosonate synthase 1 (260 aa).

The active-site Proton acceptor is Asp-26. Residues 26-30 and 144-146 each bind 1-deoxy-D-threo-hexo-2,5-diulose 6-phosphate; these read DHGIT and YPR. The Proton donor role is filled by Tyr-144. Catalysis depends on Lys-172, which acts as the Schiff-base intermediate with substrate. 1-deoxy-D-threo-hexo-2,5-diulose 6-phosphate-binding positions include 194-195 and 221-222; these read GG and GR.

It belongs to the DeoC/FbaB aldolase family. ADHS subfamily. In terms of assembly, homodecamer.

The catalysed reaction is 1-deoxy-D-threo-hexo-2,5-diulose 6-phosphate + L-aspartate 4-semialdehyde = 2,3-dioxopropyl phosphate + 2-amino-2,3,7-trideoxy-D-lyxo-hept-6-ulosonate. Its function is as follows. Catalyzes a transaldol reaction between 6-deoxy-5-ketofructose 1-phosphate (DKFP) and L-aspartate semialdehyde (ASA) with an elimination of hydroxypyruvaldehyde phosphate to yield 2-amino-3,7-dideoxy-D-threo-hept-6-ulosonate (ADH). Plays a key role in an alternative pathway of the biosynthesis of 3-dehydroquinate (DHQ), which is involved in the canonical pathway for the biosynthesis of aromatic amino acids. The protein is 2-amino-3,7-dideoxy-D-threo-hept-6-ulosonate synthase 1 of Archaeoglobus fulgidus (strain ATCC 49558 / DSM 4304 / JCM 9628 / NBRC 100126 / VC-16).